A 316-amino-acid polypeptide reads, in one-letter code: Protoheme IX farnesyltransferase (316 aa).

Helical transmembrane passes span 32-52 (VMSLVVFTAFAGLVLAPGHIN), 53-73 (PVLGLIAILCIAVGAGASGAL), 93-113 (IPAGRIAPSEALAFGLVLSGF), 116-136 (VILGLAVNWLSAAILAFTIFF), 152-172 (NIVIGGAAGAFPPMIGWACVT), 180-200 (TVLFLIIFLWTPAHFWALALF), 221-241 (VTKHQIVAYAVLTAICAVLPS), 252-271 (LVAAALGAIFVYCSIAVWRM), and 289-309 (IFYLFAVFSALMIDRLAAILV).

This sequence belongs to the UbiA prenyltransferase family. Protoheme IX farnesyltransferase subfamily.

It is found in the cell inner membrane. It carries out the reaction heme b + (2E,6E)-farnesyl diphosphate + H2O = Fe(II)-heme o + diphosphate. It participates in porphyrin-containing compound metabolism; heme O biosynthesis; heme O from protoheme: step 1/1. Its function is as follows. Converts heme B (protoheme IX) to heme O by substitution of the vinyl group on carbon 2 of heme B porphyrin ring with a hydroxyethyl farnesyl side group. The sequence is that of Protoheme IX farnesyltransferase from Rhizobium etli (strain ATCC 51251 / DSM 11541 / JCM 21823 / NBRC 15573 / CFN 42).